Here is a 239-residue protein sequence, read N- to C-terminus: Ribose-5-phosphate isomerase A (239 aa).

Residues 40–43 (SGST), 96–99 (DGAD), and 110–113 (KGGG) contribute to the substrate site. The active-site Proton acceptor is E119. K137 lines the substrate pocket.

The protein belongs to the ribose 5-phosphate isomerase family. As to quaternary structure, homodimer.

It catalyses the reaction aldehydo-D-ribose 5-phosphate = D-ribulose 5-phosphate. It participates in carbohydrate degradation; pentose phosphate pathway; D-ribose 5-phosphate from D-ribulose 5-phosphate (non-oxidative stage): step 1/1. Catalyzes the reversible conversion of ribose-5-phosphate to ribulose 5-phosphate. In Methanococcus maripaludis (strain C5 / ATCC BAA-1333), this protein is Ribose-5-phosphate isomerase A.